Reading from the N-terminus, the 256-residue chain is UstYa family oxidase phomYc (256 aa).

Residues Leu-38–Gly-58 form a helical membrane-spanning segment. 2 N-linked (GlcNAc...) asparagine glycosylation sites follow: Asn-64 and Asn-132. Positions His-158 to Cys-162 match the HXXHC 1 motif. N-linked (GlcNAc...) asparagine glycosylation occurs at Asn-179. Positions His-193–Cys-197 match the HXXHC 2 motif.

The protein belongs to the ustYa family.

The protein localises to the membrane. Its pathway is mycotoxin biosynthesis. Its function is as follows. UstYa family oxidase; part of the gene cluster that mediates the biosynthesis of the phomopsins, a group of hexapeptide mycotoxins which infects lupins and causes lupinosis disease in livestock. Within the pathway, phomYc catalyzes the desaturation of the Ile moiety into 2,3-dehydroisoleucine (dIle). The pathway starts with the processing of the precursor phomA by several endopeptidases including kexin proteases as well as the cluster-specific S41 family peptidase phomP1 and the oligopeptidase phomG to produce 10 identical copies of the hexapeptide Tyr-Val-Ile-Pro-Ile-Asp. After being excised from the precursor peptide, the core peptides are cyclized and modified post-translationally by enzymes encoded within the gene cluster. The timing and order of proteolysis of the phomA precursor and PTMs are still unknown. Two tyrosinase-like enzymes, phomQ1 and phomQ2, catalyze the chlorination and hydroxylation of Tyr, respectively. PhomYb, is proposed to be involved in the construction of the macrocyclic structure. The other 4 ustYa family proteins may be involved in PTMs that generate the unique structure of phomopsin A. PhomYa is required for the hydroxylation of C-beta of Tyr. PhomYc, phomYd, and phomYe are responsible for the biosynthesis of 2,3-dehydroisoleucine (dIle), 2,3-dehydroaspartic acid (dAsp), and 3,4-dehydroproline (dPro), respectively. While dIle formation by phomYc is indispensable for the installation of dAsp by phomYd, the order of the other PTMs have not been elucidated yet. Most of the biosynthetic enzymes likely have broad substrate specificity, and thus, there might be a metabolic grid from a precursor to phomopsin A. The enzyme(s) responsible for the biosynthesis of 3,4-dehydrovaline (dVal) have also not been identified yet. Finally, phomM acts as an S-adenosylmethionine-dependent alpha-N-methyltransferase that catalyzes two successive N-methylation reactions, converting N-desmethyl-phomopsin A to phomopsin A and phomopsin A further to an N,N-dimethylated congener called phomopsin E. The sequence is that of UstYa family oxidase phomYc from Diaporthe leptostromiformis (Lupinosis disease fungus).